A 933-amino-acid polypeptide reads, in one-letter code: Phospholipase SGR2 (933 aa).

Residues 1-14 (MEDRETHLGTREVN) are compositionally biased toward basic and acidic residues. Residues 1–22 (MEDRETHLGTREVNETSPDLLK) are disordered. Ser444 is a catalytic residue. Disordered stretches follow at residues 475-517 (PDEE…GQDN) and 553-598 (RGGQ…ESVN). The segment covering 505 to 517 (QLNNPEKITGQDN) has biased composition (polar residues). A compositionally biased stretch (basic and acidic residues) spans 553–563 (RGGQEDDHHDS). Residues 593 to 631 (DKESVNSNNEERIKLLQDEVNSLRSKVAQLLSENARILS) adopt a coiled-coil conformation. The DDHD domain maps to 669-868 (LEFKVDTFFA…ALFIIKHLYR (200 aa)). The tract at residues 871–903 (PDGPNSPTESTEGDDSPKDSSRPHSWIDRREAD) is disordered. Residues 885–902 (DSPKDSSRPHSWIDRREA) show a composition bias toward basic and acidic residues.

Forms oligomers. As to expression, expressed in roots, hypocotyls, leaves, stems and floral buds, and, at low levels, in siliques.

Its subcellular location is the vacuole membrane. Its function is as follows. Involved in vacuolar formation or function (e.g. formation of vacuolar membrane 'bulbs'). Required for amyloplast sedimentation in the endodermis during shoot gravitropism, which are thus acting as statoliths. Particularly important for the negative gravitropism leading to leaf movement observed in darkness. This Arabidopsis thaliana (Mouse-ear cress) protein is Phospholipase SGR2 (SGR2).